Consider the following 224-residue polypeptide: UPF0758 protein PST_0473 (224 aa).

The 123-residue stretch at 102 to 224 (ALESPQAVRD…PLSMAEYGWM (123 aa)) folds into the MPN domain. Histidine 173, histidine 175, and aspartate 186 together coordinate Zn(2+). Positions 173 to 186 (HNHPSGVAEPSQAD) match the JAMM motif motif.

The protein belongs to the UPF0758 family.

In Stutzerimonas stutzeri (strain A1501) (Pseudomonas stutzeri), this protein is UPF0758 protein PST_0473.